The primary structure comprises 191 residues: Fe/S biogenesis protein NfuA (191 aa).

Cysteine 149 and cysteine 152 together coordinate [4Fe-4S] cluster.

This sequence belongs to the NfuA family. As to quaternary structure, homodimer. [4Fe-4S] cluster serves as cofactor.

Functionally, involved in iron-sulfur cluster biogenesis. Binds a 4Fe-4S cluster, can transfer this cluster to apoproteins, and thereby intervenes in the maturation of Fe/S proteins. Could also act as a scaffold/chaperone for damaged Fe/S proteins. The polypeptide is Fe/S biogenesis protein NfuA (Escherichia coli O139:H28 (strain E24377A / ETEC)).